The sequence spans 933 residues: MAASRLDFGEVETFLDRHPELFEDYLMRKGKQELVDKWLQRHTSGQGASSLRPALAGASSLAQSNAKGSPGIGGGAGPQGSAHSHPTPGGGESAGVPLSPSWASGSRGDGSLQRRASQKELRKSFARSKAIHVNRTYDEQVTSRAQEPLSSVRRRALLRKASSLPPTTAHILSALLESRVNLPQYPPTAIDYKCHLKKHNERQFFLELVKDISNDLDLTSLSYKILIFVCLMVDADRCSLFLVEGAAAGKKTLVSKFFDVHAGTPLLPCSSTENSNEVQVPWGKGIIGYVGEHGETVNIPDAYQDRRFNDEIDKLTGYKTKSLLCMPIRNSDGEIIGVAQAINKVPEGAPFTEDDEKVMQMYLPFCGIAISNAQLFAASRKEYERSRALLEVVNDLFEEQTDLEKIVKKIMHRAQTLLKCERCSVLLLEDIESPVVKFTKSFELMSPKCSADAENSFKESVEKSSYSDWLINNSIAELVASTGLPVNVSDAYQDPRFDAEADQISGFHIRSVLCVPIWNSNHQIIGVAQVLNRLDGKPFDDADQRLFEAFVIFCGLGINNTIMYDQVKKSWAKQSVALDVLSYHATCSKAEVDKFKAANIPLVSELAIDDIHFDDFSLDVDAMITAALRMFMELGMVQKFKIDYETLCRWLLTVRKNYRMVLYHNWRHAFNVCQLMFAMLTTAGFQEILTEVEILAVIVGCLCHDLDHRGTNNAFQAKSDSALAQLYGTSATLEHHHFNHAVMILQSEGHNIFANLSSKEYSDLMQLLKQSILATDLTLYFERRTEFFELVRKGDYDWSITSHRDVFRSMLMTACDLGAVTKPWEISRQVAELVTSEFFEQGDRERSELKLTPSAIFDRNRKDELPRLQLEWIDSICMPLYQALVKVNAKLKPMLDSVAANRRKWEELHQKRLQVSAASPDPASPMVAGEDRL.

The tract at residues 42 to 121 (HTSGQGASSL…LQRRASQKEL (80 aa)) is disordered. Phosphoserine occurs at positions 162, 163, and 239. 2 consecutive GAF domains span residues 217-370 (DLTS…GIAI) and 402-558 (DLEK…GLGI). 3',5'-cyclic GMP is bound at residue Ser-424. One can recognise a PDEase domain in the interval 588-912 (SKAEVDKFKA…RKWEELHQKR (325 aa)). His-664 serves as the catalytic Proton donor. 4 residues coordinate a divalent metal cation: His-668, His-704, Asp-705, and Asp-816. A disordered region spans residues 913 to 933 (LQVSAASPDPASPMVAGEDRL).

It belongs to the cyclic nucleotide phosphodiesterase family. It depends on a divalent metal cation as a cofactor. Expressed in testis and developing spermatoza.

Its subcellular location is the cytoplasm. The protein resides in the cytosol. It catalyses the reaction 3',5'-cyclic GMP + H2O = GMP + H(+). The catalysed reaction is 3',5'-cyclic AMP + H2O = AMP + H(+). Inhibited by 3-isobutyl-1-methylxanthine (IBMX), zaprinast and dipyridamole. cGMP acts as an allosteric activator. Plays a role in signal transduction by regulating the intracellular concentration of cyclic nucleotides cAMP and cGMP. Catalyzes the hydrolysis of both cAMP and cGMP to 5'-AMP and 5'-GMP, respectively. The polypeptide is Dual 3',5'-cyclic-AMP and -GMP phosphodiesterase 11A (Pde11a) (Mus musculus (Mouse)).